We begin with the raw amino-acid sequence, 43 residues long: Truncated K3L homolog (43 aa).

This sequence belongs to the orthopoxvirus OPG041 family.

In Cynomys gunnisoni (Gunnison's prairie dog), this protein is Truncated K3L homolog (OPG041).